The sequence spans 321 residues: Lipoyl synthase (321 aa).

Positions 68, 73, 79, 94, 98, 101, and 308 each coordinate [4Fe-4S] cluster. Residues 80–297 (FNHGTATFMI…KAEALAMGFT (218 aa)) enclose the Radical SAM core domain.

This sequence belongs to the radical SAM superfamily. Lipoyl synthase family. The cofactor is [4Fe-4S] cluster.

The protein resides in the cytoplasm. The catalysed reaction is [[Fe-S] cluster scaffold protein carrying a second [4Fe-4S](2+) cluster] + N(6)-octanoyl-L-lysyl-[protein] + 2 oxidized [2Fe-2S]-[ferredoxin] + 2 S-adenosyl-L-methionine + 4 H(+) = [[Fe-S] cluster scaffold protein] + N(6)-[(R)-dihydrolipoyl]-L-lysyl-[protein] + 4 Fe(3+) + 2 hydrogen sulfide + 2 5'-deoxyadenosine + 2 L-methionine + 2 reduced [2Fe-2S]-[ferredoxin]. Its pathway is protein modification; protein lipoylation via endogenous pathway; protein N(6)-(lipoyl)lysine from octanoyl-[acyl-carrier-protein]: step 2/2. Functionally, catalyzes the radical-mediated insertion of two sulfur atoms into the C-6 and C-8 positions of the octanoyl moiety bound to the lipoyl domains of lipoate-dependent enzymes, thereby converting the octanoylated domains into lipoylated derivatives. The chain is Lipoyl synthase from Escherichia fergusonii (strain ATCC 35469 / DSM 13698 / CCUG 18766 / IAM 14443 / JCM 21226 / LMG 7866 / NBRC 102419 / NCTC 12128 / CDC 0568-73).